The chain runs to 447 residues: Tubulin beta chain (447 aa).

Residues glutamine 11, glutamate 69, serine 138, glycine 142, threonine 143, glycine 144, asparagine 204, and asparagine 226 each coordinate GTP. A Mg(2+)-binding site is contributed by glutamate 69. The interval 425-447 (YQEASISEGEEEYDEEAPLEAEE) is disordered. A compositionally biased stretch (acidic residues) spans 432–447 (EGEEEYDEEAPLEAEE).

It belongs to the tubulin family. As to quaternary structure, dimer of alpha and beta chains. A typical microtubule is a hollow water-filled tube with an outer diameter of 25 nm and an inner diameter of 15 nM. Alpha-beta heterodimers associate head-to-tail to form protofilaments running lengthwise along the microtubule wall with the beta-tubulin subunit facing the microtubule plus end conferring a structural polarity. Microtubules usually have 13 protofilaments but different protofilament numbers can be found in some organisms and specialized cells. The cofactor is Mg(2+).

Its subcellular location is the cytoplasm. It is found in the cytoskeleton. Its function is as follows. Tubulin is the major constituent of microtubules, a cylinder consisting of laterally associated linear protofilaments composed of alpha- and beta-tubulin heterodimers. Microtubules grow by the addition of GTP-tubulin dimers to the microtubule end, where a stabilizing cap forms. Below the cap, tubulin dimers are in GDP-bound state, owing to GTPase activity of alpha-tubulin. This Phaeosphaeria nodorum (strain SN15 / ATCC MYA-4574 / FGSC 10173) (Glume blotch fungus) protein is Tubulin beta chain (tubB).